A 190-amino-acid chain; its full sequence is UPF0301 protein PSPTO_5037 (190 aa).

Belongs to the UPF0301 (AlgH) family.

The chain is UPF0301 protein PSPTO_5037 from Pseudomonas syringae pv. tomato (strain ATCC BAA-871 / DC3000).